Consider the following 782-residue polypeptide: HHIP-like protein 1 (782 aa).

A signal peptide spans 1 to 19 (MARARAGALLALWVLGAAA). 4 disulfide bridges follow: C181–C521, C185–C528, C399–C417, and C484–C584. N234 is a glycosylation site (N-linked (GlcNAc...) asparagine). Residues 604–666 (EKFIPKTRST…RRGRLNSASR (63 aa)) form a disordered region. The segment covering 610–623 (TRSTPRPTARAPTR) has biased composition (low complexity). The span at 632–642 (AAPPAPTPRPA) shows a compositional bias: pro residues. Residues 673–776 (VRLVRPAGLS…HDEDAGVVCS (104 aa)) enclose the SRCR domain. Intrachain disulfides connect C700–C765, C713–C775, and C745–C755.

Belongs to the HHIP family.

It localises to the secreted. This is HHIP-like protein 1 (HHIPL1) from Homo sapiens (Human).